A 149-amino-acid polypeptide reads, in one-letter code: Macrodomain Ter protein (149 aa).

It belongs to the MatP family. In terms of assembly, homodimer.

The protein localises to the cytoplasm. Required for spatial organization of the terminus region of the chromosome (Ter macrodomain) during the cell cycle. Prevents early segregation of duplicated Ter macrodomains during cell division. Binds specifically to matS, which is a 13 bp signature motif repeated within the Ter macrodomain. The protein is Macrodomain Ter protein of Vibrio parahaemolyticus serotype O3:K6 (strain RIMD 2210633).